Reading from the N-terminus, the 327-residue chain is Zinc transport protein ZntB (327 aa).

The Cytoplasmic segment spans residues 1 to 271; sequence MESFAGKELQ…AMNRRTYTMS (271 aa). A helical membrane pass occupies residues 272–292; sequence LLAMVFLPTTFLTGLFGVNLG. Topologically, residues 293 to 300 are periplasmic; that stretch reads GIPGGDAP. A helical membrane pass occupies residues 301-321; that stretch reads FGFFTFCLMLVILVGGVAWWL. At 322 to 327 the chain is on the cytoplasmic side; sequence KRSKWL.

It belongs to the CorA metal ion transporter (MIT) (TC 1.A.35) family.

The protein localises to the cell inner membrane. The enzyme catalyses Zn(2+)(out) + H(+)(out) = Zn(2+)(in) + H(+)(in). Functionally, zinc transporter. Acts as a Zn(2+):proton symporter, which likely mediates zinc ion uptake. The sequence is that of Zinc transport protein ZntB from Pectobacterium carotovorum subsp. carotovorum (strain PC1).